A 194-amino-acid chain; its full sequence is Small ribosomal subunit protein uS5 (194 aa).

One can recognise an S5 DRBM domain in the interval 26-89; it reads LEEKVVEIRR…ADAKKHLIRV (64 aa).

It belongs to the universal ribosomal protein uS5 family. In terms of assembly, part of the 30S ribosomal subunit. Contacts proteins S4 and S8.

With S4 and S12 plays an important role in translational accuracy. Functionally, located at the back of the 30S subunit body where it stabilizes the conformation of the head with respect to the body. The polypeptide is Small ribosomal subunit protein uS5 (Persephonella marina (strain DSM 14350 / EX-H1)).